Consider the following 504-residue polypeptide: Malonyl-CoA decarboxylase, mitochondrial (504 aa).

Residues 1–50 (MRGLRRGLSRLGPRLGPWAVPRSLRRVLRAAGPWRGQSSAGSVSERGGAS) constitute a mitochondrion transit peptide. The interval 51–201 (MEEVLSRSVP…VLKNMLSEWF (151 aa)) is alpha-helical domain. The interval 202 to 504 (STGFLNLERV…VSQFQQNSKL (303 aa)) is catalytic domain. Residue serine 340 is the Proton acceptor of the active site. Histidine 434 serves as the catalytic Proton donor. A Microbody targeting signal motif is present at residues 502–504 (SKL).

The protein resides in the mitochondrion. It localises to the cytoplasm. The protein localises to the peroxisome. The catalysed reaction is malonyl-CoA + H(+) = acetyl-CoA + CO2. It functions in the pathway metabolic intermediate biosynthesis; acetyl-CoA biosynthesis; acetyl-CoA from malonyl-CoA: step 1/1. Catalyzes the conversion of malonyl-CoA to acetyl-CoA. In the fatty acid biosynthesis MCD selectively removes malonyl-CoA and thus assures that methyl-malonyl-CoA is the only chain elongating substrate for fatty acid synthase and that fatty acids with multiple methyl side chains are produced. The protein is Malonyl-CoA decarboxylase, mitochondrial (MLYCD) of Anser anser anser (Western greylag goose).